We begin with the raw amino-acid sequence, 472 residues long: Regulator of G-protein signaling 6 (472 aa).

In terms of domain architecture, DEP spans 40-115 (KTGGVPIRTV…DDGTFYRFQA (76 aa)). Residues 261 to 330 (IRKQITFLNA…MSKEPSQQRV (70 aa)) form the G protein gamma domain. Positions 336-441 (SFDEILKDQV…LMKSDSYARF (106 aa)) constitute an RGS domain.

In terms of assembly, interacts with GNB5. Interacts with RGS7BP, leading to regulate the subcellular location of the heterodimer formed with GNB5. Interacts with GNAI1.

The protein resides in the cytoplasm. The protein localises to the cytosol. Its subcellular location is the membrane. It localises to the nucleus. It is found in the cell membrane. Functionally, regulates G protein-coupled receptor signaling cascades. Inhibits signal transduction by increasing the GTPase activity of G protein alpha subunits, thereby driving them into their inactive GDP-bound form. The RGS6/GNB5 dimer enhances GNAO1 GTPase activity. This is Regulator of G-protein signaling 6 (RGS6) from Homo sapiens (Human).